Here is a 482-residue protein sequence, read N- to C-terminus: UDP-glucose 6-dehydrogenase 2 (482 aa).

Residues 8–13 (GAGYVG), aspartate 33, arginine 38, 86–90 (VNTPT), 127–128 (ST), and glutamate 163 contribute to the NAD(+) site. Substrate contacts are provided by residues 159 to 163 (EFLAE), 218 to 225 (KLAANAFL), and 258 to 271 (RIGP…VGFG). The active-site Nucleophile is the cysteine 274. NAD(+) is bound at residue 274-277 (CFQK). 336–337 (FK) is a substrate binding site. Arginine 344 lines the NAD(+) pocket. Position 395 is a phosphoserine (serine 395). Arginine 449 is a substrate binding site.

Belongs to the UDP-glucose/GDP-mannose dehydrogenase family.

It catalyses the reaction UDP-alpha-D-glucose + 2 NAD(+) + H2O = UDP-alpha-D-glucuronate + 2 NADH + 3 H(+). It functions in the pathway nucleotide-sugar biosynthesis; UDP-alpha-D-glucuronate biosynthesis; UDP-alpha-D-glucuronate from UDP-alpha-D-glucose: step 1/1. Its function is as follows. Involved in the biosynthesis of UDP-glucuronic acid (UDP-GlcA), providing nucleotide sugars for cell-wall polymers. This chain is UDP-glucose 6-dehydrogenase 2 (UGD2), found in Oryza sativa subsp. japonica (Rice).